Reading from the N-terminus, the 253-residue chain is 5'/3'-nucleotidase SurE (253 aa).

Residues D8, D9, S39, and N92 each coordinate a divalent metal cation.

The protein belongs to the SurE nucleotidase family. A divalent metal cation serves as cofactor.

The protein localises to the cytoplasm. The catalysed reaction is a ribonucleoside 5'-phosphate + H2O = a ribonucleoside + phosphate. The enzyme catalyses a ribonucleoside 3'-phosphate + H2O = a ribonucleoside + phosphate. It catalyses the reaction [phosphate](n) + H2O = [phosphate](n-1) + phosphate + H(+). In terms of biological role, nucleotidase with a broad substrate specificity as it can dephosphorylate various ribo- and deoxyribonucleoside 5'-monophosphates and ribonucleoside 3'-monophosphates with highest affinity to 3'-AMP. Also hydrolyzes polyphosphate (exopolyphosphatase activity) with the preference for short-chain-length substrates (P20-25). Might be involved in the regulation of dNTP and NTP pools, and in the turnover of 3'-mononucleotides produced by numerous intracellular RNases (T1, T2, and F) during the degradation of various RNAs. This Sodalis glossinidius (strain morsitans) protein is 5'/3'-nucleotidase SurE.